Here is a 530-residue protein sequence, read N- to C-terminus: Arginine--tRNA ligase (530 aa).

A 'HIGH' region motif is present at residues 113-123 (ANPTGPLHIGH).

This sequence belongs to the class-I aminoacyl-tRNA synthetase family. In terms of assembly, monomer.

It is found in the cytoplasm. The enzyme catalyses tRNA(Arg) + L-arginine + ATP = L-arginyl-tRNA(Arg) + AMP + diphosphate. This chain is Arginine--tRNA ligase, found in Campylobacter jejuni subsp. doylei (strain ATCC BAA-1458 / RM4099 / 269.97).